The chain runs to 171 residues: Crossover junction endodeoxyribonuclease RuvC (171 aa).

Active-site residues include aspartate 11, glutamate 71, and aspartate 143. Aspartate 11, glutamate 71, and aspartate 143 together coordinate Mg(2+).

It belongs to the RuvC family. Homodimer which binds Holliday junction (HJ) DNA. The HJ becomes 2-fold symmetrical on binding to RuvC with unstacked arms; it has a different conformation from HJ DNA in complex with RuvA. In the full resolvosome a probable DNA-RuvA(4)-RuvB(12)-RuvC(2) complex forms which resolves the HJ. Mg(2+) serves as cofactor.

The protein resides in the cytoplasm. The enzyme catalyses Endonucleolytic cleavage at a junction such as a reciprocal single-stranded crossover between two homologous DNA duplexes (Holliday junction).. In terms of biological role, the RuvA-RuvB-RuvC complex processes Holliday junction (HJ) DNA during genetic recombination and DNA repair. Endonuclease that resolves HJ intermediates. Cleaves cruciform DNA by making single-stranded nicks across the HJ at symmetrical positions within the homologous arms, yielding a 5'-phosphate and a 3'-hydroxyl group; requires a central core of homology in the junction. The consensus cleavage sequence is 5'-(A/T)TT(C/G)-3'. Cleavage occurs on the 3'-side of the TT dinucleotide at the point of strand exchange. HJ branch migration catalyzed by RuvA-RuvB allows RuvC to scan DNA until it finds its consensus sequence, where it cleaves and resolves the cruciform DNA. The sequence is that of Crossover junction endodeoxyribonuclease RuvC from Chelativorans sp. (strain BNC1).